Here is a 1577-residue protein sequence, read N- to C-terminus: Hemolysin (1577 aa).

The N-terminal stretch at M1–G29 is a signal peptide. Residues E437–N446 are compositionally biased toward basic and acidic residues. Disordered regions lie at residues E437–T467, T1081–P1103, Q1169–A1188, and K1213–L1232. Composition is skewed to polar residues over residues L454 to T467, T1081 to A1095, and Q1169 to G1184.

The protein localises to the cell outer membrane. Functionally, bacterial hemolysins are exotoxins that attack blood cell membranes and cause cell rupture by mechanisms not clearly defined. Cell-bound hemolysin, which releases heme-iron from erythrocytes by interaction with the erythrocyte membrane. HpmA requires HpmB function. This Proteus mirabilis protein is Hemolysin (hpmA).